We begin with the raw amino-acid sequence, 202 residues long: uncharacterized protein (202 aa).

Lys136 is covalently cross-linked (Isoglutamyl lysine isopeptide (Lys-Gln) (interchain with Q-Cter in protein Pup)).

This is an uncharacterized protein from Mycobacterium tuberculosis (strain ATCC 25618 / H37Rv).